Here is a 213-residue protein sequence, read N- to C-terminus: Protein big brother (213 aa).

It belongs to the CBF-beta family.

Its subcellular location is the nucleus. Regulates the DNA-binding properties of Runt. The sequence is that of Protein big brother (Bgb) from Drosophila melanogaster (Fruit fly).